The primary structure comprises 626 residues: Anaphase-promoting complex subunit CDC23 (626 aa).

S59 carries the post-translational modification Phosphoserine; by CDC28. TPR repeat units lie at residues 215–248 (ALLY…YSFN), 295–328 (MIKF…FPNF), 329–362 (TFLK…DPYR), 363–396 (LNDL…DRFR), 397–430 (PETC…DKKT), 431–464 (TNAW…CPRD), 465–498 (FKAW…KPWD), 499–532 (RRIW…SQTV), and 536–569 (TSIY…EELL).

This sequence belongs to the APC8/CDC23 family. The APC/C is composed of at least 13 subunits that stay tightly associated throughout the cell cycle: APC1, APC2, APC4, APC5, APC9, APC11, CDC16, CDC23, CDC26, CDC27, DOC1, MND2 and SWM1. CDC23 interacts directly with SWM1 and binds the destruction box (D-box) of the substrate cyclin CLB2. In terms of processing, phosphorylated by CDC28, which is required for the early mitotic activity of the APC/C in its CDC20-bound form.

The protein resides in the nucleus. It is found in the chromosome. The protein localises to the centromere. Its subcellular location is the kinetochore. Its pathway is protein modification; protein ubiquitination. Its function is as follows. Component of the anaphase promoting complex/cyclosome (APC/C), a cell cycle-regulated E3 ubiquitin-protein ligase complex that controls progression through mitosis and the G1 phase of the cell cycle. The APC/C is thought to confer substrate specificity and, in the presence of ubiquitin-conjugating E2 enzymes, it catalyzes the formation of protein-ubiquitin conjugates that are subsequently degraded by the 26S proteasome. In early mitosis, the APC/C is activated by CDC20 and targets securin PDS1, the B-type cyclin CLB5, and other anaphase inhibitory proteins for proteolysis, thereby triggering the separation of sister chromatids at the metaphase-to-anaphase transition. In late mitosis and in G1, degradation of CLB5 allows activation of the APC/C by CDH1, which is needed to destroy CDC20 and the B-type cyclin CLB2 to allow exit from mitosis and creating the low CDK state necessary for cytokinesis and for reforming prereplicative complexes in G1 prior to another round of replication. This chain is Anaphase-promoting complex subunit CDC23 (CDC23), found in Saccharomyces cerevisiae (strain ATCC 204508 / S288c) (Baker's yeast).